Here is a 46-residue protein sequence, read N- to C-terminus: Sperm protamine P1 (46 aa).

Belongs to the protamine P1 family. As to expression, testis.

It localises to the nucleus. It is found in the chromosome. Its function is as follows. Protamines substitute for histones in the chromatin of sperm during the haploid phase of spermatogenesis. They compact sperm DNA into a highly condensed, stable and inactive complex. The sequence is that of Sperm protamine P1 (PRM1) from Glauconycteris beatrix (Beatrix's bat).